The sequence spans 142 residues: Large ribosomal subunit protein uL11 (142 aa).

Belongs to the universal ribosomal protein uL11 family. Part of the ribosomal stalk of the 50S ribosomal subunit. Interacts with L10 and the large rRNA to form the base of the stalk. L10 forms an elongated spine to which L12 dimers bind in a sequential fashion forming a multimeric L10(L12)X complex. Post-translationally, one or more lysine residues are methylated.

In terms of biological role, forms part of the ribosomal stalk which helps the ribosome interact with GTP-bound translation factors. The polypeptide is Large ribosomal subunit protein uL11 (Haemophilus ducreyi (strain 35000HP / ATCC 700724)).